The sequence spans 200 residues: Putative peroxiredoxin sll0755 (200 aa).

One can recognise a Thioredoxin domain in the interval 5 to 163 (LRVGQPAPDF…TLRVLKAIRH (159 aa)). Residue cysteine 50 is the Cysteine sulfenic acid (-SOH) intermediate of the active site.

The protein belongs to the peroxiredoxin family. AhpC/Prx1 subfamily. As to quaternary structure, homodimer; disulfide-linked, upon oxidation.

The protein localises to the cytoplasm. The enzyme catalyses a hydroperoxide + [thioredoxin]-dithiol = an alcohol + [thioredoxin]-disulfide + H2O. In terms of biological role, thiol-specific peroxidase that catalyzes the reduction of hydrogen peroxide and organic hydroperoxides to water and alcohols, respectively. Plays a role in cell protection against oxidative stress by detoxifying peroxides. The polypeptide is Putative peroxiredoxin sll0755 (Synechocystis sp. (strain ATCC 27184 / PCC 6803 / Kazusa)).